The following is a 220-amino-acid chain: Fructose-6-phosphate aldolase (220 aa).

Lys-85 acts as the Schiff-base intermediate with substrate in catalysis.

Belongs to the transaldolase family. Type 3A subfamily. In terms of assembly, homodecamer.

The protein resides in the cytoplasm. It catalyses the reaction beta-D-fructose 6-phosphate = dihydroxyacetone + D-glyceraldehyde 3-phosphate. Its function is as follows. Catalyzes the reversible formation of fructose 6-phosphate from dihydroxyacetone and D-glyceraldehyde 3-phosphate via an aldolization reaction. The chain is Fructose-6-phosphate aldolase from Salmonella arizonae (strain ATCC BAA-731 / CDC346-86 / RSK2980).